The following is a 203-amino-acid chain: Large ribosomal subunit protein uL13 (203 aa).

N-acetylalanine is present on A2. At R59 the chain carries Citrulline. S77 bears the Phosphoserine mark. R140 is subject to Citrulline. K191 carries the N6-acetyllysine modification.

Belongs to the universal ribosomal protein uL13 family. As to quaternary structure, component of the 60S ribosome. Component of the GAIT complex. Interacts with EIF4G1. Post-translationally, phosphorylation at Ser-77 upon interferon-gamma treatment in macrophages involves a DAPK1-DAPK3 kinase cascade and is causing release from the ribosome, association with the GAIT complex and subsequent involvement in transcript-selective translation inhibition. In terms of processing, citrullinated by PADI4.

Its subcellular location is the cytoplasm. In terms of biological role, associated with ribosomes but is not required for canonical ribosome function and has extra-ribosomal functions. Component of the GAIT (gamma interferon-activated inhibitor of translation) complex which mediates interferon-gamma-induced transcript-selective translation inhibition in inflammation processes. Upon interferon-gamma activation and subsequent phosphorylation dissociates from the ribosome and assembles into the GAIT complex which binds to stem loop-containing GAIT elements in the 3'-UTR of diverse inflammatory mRNAs (such as ceruplasmin) and suppresses their translation. In the GAIT complex interacts with m7G cap-bound eIF4G at or near the eIF3-binding site and blocks the recruitment of the 43S ribosomal complex. Involved in methylation of rRNA. The protein is Large ribosomal subunit protein uL13 (RPL13A) of Bos taurus (Bovine).